A 169-amino-acid polypeptide reads, in one-letter code: Large ribosomal subunit protein uL10 (169 aa).

It belongs to the universal ribosomal protein uL10 family. Part of the ribosomal stalk of the 50S ribosomal subunit. The N-terminus interacts with L11 and the large rRNA to form the base of the stalk. The C-terminus forms an elongated spine to which L12 dimers bind in a sequential fashion forming a multimeric L10(L12)X complex.

Functionally, forms part of the ribosomal stalk, playing a central role in the interaction of the ribosome with GTP-bound translation factors. The chain is Large ribosomal subunit protein uL10 from Onion yellows phytoplasma (strain OY-M).